A 334-amino-acid chain; its full sequence is MDDRMIDGELQDQDVEIELSLRPSTLSQYIGQDKVKENLTIFIQAAKMREEPLDHVLLYGPPGLGKTTLASIISYEMGVQFRSTSGPAIERAGDLAAILSSLEPGDVLFIDEVHRLPRSVEEVLYAAMEDFFIDIVIGTGPSARSVRIDLPPFTLVGATTRAGLLSAPLRDRFGVLSRLEYYEIKDLCNIVERTADIFNMPISSEAAIEVARRSRGTPRIANRLLKRVRDISQVKGEEEISLESTKQALEMLQVDDAGLDHVDHKLLTGIIEGFSGGPVGLDTIAATIGEESQTIEEVYEPFLLQLGFIQRTPRGRVITSKAYDHLGIKRTGED.

A large ATPase domain (RuvB-L) region spans residues 1 to 182; sequence MDDRMIDGEL…FGVLSRLEYY (182 aa). Residues L21, R22, G63, K66, T67, T68, 129-131, R172, Y182, and R219 contribute to the ATP site; that span reads EDF. Residue T67 participates in Mg(2+) binding. The segment at 183–253 is small ATPAse domain (RuvB-S); it reads EIKDLCNIVE…STKQALEMLQ (71 aa). The tract at residues 256–334 is head domain (RuvB-H); that stretch reads DAGLDHVDHK…HLGIKRTGED (79 aa). Residues R311 and R316 each coordinate DNA.

It belongs to the RuvB family. In terms of assembly, homohexamer. Forms an RuvA(8)-RuvB(12)-Holliday junction (HJ) complex. HJ DNA is sandwiched between 2 RuvA tetramers; dsDNA enters through RuvA and exits via RuvB. An RuvB hexamer assembles on each DNA strand where it exits the tetramer. Each RuvB hexamer is contacted by two RuvA subunits (via domain III) on 2 adjacent RuvB subunits; this complex drives branch migration. In the full resolvosome a probable DNA-RuvA(4)-RuvB(12)-RuvC(2) complex forms which resolves the HJ.

The protein resides in the cytoplasm. It catalyses the reaction ATP + H2O = ADP + phosphate + H(+). Functionally, the RuvA-RuvB-RuvC complex processes Holliday junction (HJ) DNA during genetic recombination and DNA repair, while the RuvA-RuvB complex plays an important role in the rescue of blocked DNA replication forks via replication fork reversal (RFR). RuvA specifically binds to HJ cruciform DNA, conferring on it an open structure. The RuvB hexamer acts as an ATP-dependent pump, pulling dsDNA into and through the RuvAB complex. RuvB forms 2 homohexamers on either side of HJ DNA bound by 1 or 2 RuvA tetramers; 4 subunits per hexamer contact DNA at a time. Coordinated motions by a converter formed by DNA-disengaged RuvB subunits stimulates ATP hydrolysis and nucleotide exchange. Immobilization of the converter enables RuvB to convert the ATP-contained energy into a lever motion, pulling 2 nucleotides of DNA out of the RuvA tetramer per ATP hydrolyzed, thus driving DNA branch migration. The RuvB motors rotate together with the DNA substrate, which together with the progressing nucleotide cycle form the mechanistic basis for DNA recombination by continuous HJ branch migration. Branch migration allows RuvC to scan DNA until it finds its consensus sequence, where it cleaves and resolves cruciform DNA. The polypeptide is Holliday junction branch migration complex subunit RuvB (Oceanobacillus iheyensis (strain DSM 14371 / CIP 107618 / JCM 11309 / KCTC 3954 / HTE831)).